Reading from the N-terminus, the 351-residue chain is Ion-translocating oxidoreductase complex subunit D (351 aa).

4 helical membrane-spanning segments follow: residues 18 to 38 (IMLL…YFFG), 40 to 60 (GSLI…GAVL), 87 to 107 (LPPL…IVIA), and 121 to 141 (PAMV…TSWL). At T185 the chain carries FMN phosphoryl threonine. Helical transmembrane passes span 211-231 (VLAG…GLLL), 241-261 (IPVS…MIAP), 264-284 (FASP…FFIA), 298-318 (LIFG…GGYP), and 320-340 (GVAF…HYTQ).

This sequence belongs to the NqrB/RnfD family. As to quaternary structure, the complex is composed of six subunits: RnfA, RnfB, RnfC, RnfD, RnfE and RnfG. FMN serves as cofactor.

The protein localises to the cell inner membrane. Functionally, part of a membrane-bound complex that couples electron transfer with translocation of ions across the membrane. This is Ion-translocating oxidoreductase complex subunit D from Yersinia pseudotuberculosis serotype I (strain IP32953).